Here is a 174-residue protein sequence, read N- to C-terminus: Anthrone oxygenase CPUR_05435 (174 aa).

Transmembrane regions (helical) follow at residues 13–33 (VALASGVFLSGAMFSVSAIMI), 56–76 (YGSVLMPSMSVAIAAVYGFAS), 88–108 (CLAAGALTLAIAPYTWLAMIP), and 140–160 (WVVLHSIRSILPLAGAIMGFT).

The protein belongs to the anthrone oxygenase family.

It is found in the membrane. The enzyme catalyses emodin anthrone + O2 = emodin + H2O + H(+). Functionally, anthrone oxygenase; part of the ergochrome gene cluster responsible for the typical purple-black color of the ergot sclerotia. The ergochrome gene cluster produces several ergot pigments including the yellow ergochrome secalonic acid and its derivatives, as well as the red anthraquinones endocrocin and clavorubin. The pathway begins with the synthesis of atrochrysone thioester by the polyketide synthase (PKS) CPUR_05437. The atrochrysone carboxyl ACP thioesterase CPUR_05436 then breaks the thioester bond and releases the atrochrysone carboxylic acid from CPUR_05437. The decarboxylase CPUR_05434 then catalyzes the concerted decarboxylation-elimination required to convert atochrysone carboxylic acid into emodin anthrone, which is further oxidized to emodin by the anthrone oxygenase CPUR_05435. Emodin is further modified to yield monodictyphenone via several steps involving CPUR_05427, CPUR_05428, CPUR_05429 and CPUR_05430. The short chain dehydrogenase/reductase CPUR_05418 then catalyzes the C-5 ketoreduction to give the xanthone skeleton of the monomeric units. Ergochromes formation requires further dimerization steps of different xanthone units, probably catalyzed by the cytochrome P450 monooxygenase CPUR_05419. CPUR_05425, CPUR_05426 and CPUR_05431 are unique to Claviceps, thus it is likely that they are involved in further modification of xanthone units or in their dimerization. The yellow ergochromes and the red anthraquinone pigments endocrocin and clavorubin are products from the same PKS derived precursors and the latter are likely shunt products in the pathway of xanthone biosynthesis. It is proposed that atrochrysone carboxylic acid released from the PKS CPUR_05437 can also be converted to endocrocin anthrone which is further oxidized into endocrocin by CPUR_05435. Endocrocin could be then modified to clavorubin, possibly by CPUR_05423 and CPUR_05431. Clavorubin is the principal anthraquinone metabolite produced by the cluster with a much higher yield compared to endocrocin. The chain is Anthrone oxygenase CPUR_05435 from Claviceps purpurea (strain 20.1) (Ergot fungus).